The sequence spans 393 residues: Purine permease 14 (393 aa).

Alanine 2 is modified (N-acetylalanine). 10 consecutive transmembrane segments (helical) span residues 46–66 (WPTITISIIFVIIGQSIAKLL), 90–110 (TQSLLQTVGFPLLLLPFLIFI), 133–153 (LAVIYICIGIIMSVQGRLAAM), 161–181 (GVFTLIYTAQLFFTPIFAAFI), 189–209 (WVVISVILAIITGALTLSSSF), 225–245 (WAALFAGICFALLLCNIQNVF), 268–288 (VIIFSSLVATIISVVGLLIAG), 308–328 (VMAMVGQAVSWQVYWVGIVGL), 339–359 (VISVITWPIVSVLVVIFFNFM), and 363–383 (FDAFKGVALVTAVLSAAAYFF).

Belongs to the purine permeases (TC 2.A.7.14) family. As to expression, expressed in seedlings, leaves, embryos, ovules, seeds and the root and shoot meristems. In heart-stage embryos, detected in cells that failed to respond to cytokinins, including the prospective cotyledons.

The protein resides in the cell membrane. Functionally, purine permease implicated in ATP-dependent cytokinin translocation that controls the spatiotemporal landscape of cytokinin signaling. Depletes ligands from the apoplast, which leads to a suppression of the cytokinin response. This Arabidopsis thaliana (Mouse-ear cress) protein is Purine permease 14.